Reading from the N-terminus, the 446-residue chain is MVTPLHNSRPRRVAVLSVHTSPLAQPGTGDAGGMNVYVLQSAIQMARRGVEVEIFTRATSSADAPVQEAAPGVLVRNVVAGPFEGLDKQDLPTQLCAFVAGVLREEARHEPGYYNLVHSHYWLSGQVGWLARDRWGVPLVHTAHTLAAVKNLSLAEGDTPEPAARQIGEQQVVAESDRLVANTTEESDQLVRHYGADPNRIDVVAPGADLTRYRPGDRDAARATLGLDPRETVVTFVGRIQPLKAPDVLLRAAAELIARDPASSLRVLVVGGPSGSGLARPDALIELASSLGIAARVTFLPPQAPDRLADVYRASDLVAVPSYSESFGLVAIEAQACGTPVIAANVGGLGVAVRSGETGLLVDGHRTEDWATALQSLVSEPARLAALAAEAPRHAENFSWEHTADGLLESYRMATVNYNYGHGPSEFSPRRGRGLWKLRRAGGVRA.

Histidine 19 lines the 1D-myo-inositol 3-phosphate pocket. UDP-N-acetyl-alpha-D-glucosamine-binding positions include 25 to 26 and glycine 33; that span reads QP. Residues 30–35, lysine 88, tyrosine 121, threonine 145, and arginine 165 each bind 1D-myo-inositol 3-phosphate; that span reads DAGGMN. The UDP-N-acetyl-alpha-D-glucosamine site is built by arginine 239, lysine 244, and glutamine 303. Mg(2+)-binding residues include tyrosine 312, arginine 313, and serine 315. Glutamate 325 and glutamate 333 together coordinate UDP-N-acetyl-alpha-D-glucosamine. Position 339 (threonine 339) interacts with Mg(2+).

Belongs to the glycosyltransferase group 1 family. MshA subfamily. In terms of assembly, homodimer.

It catalyses the reaction 1D-myo-inositol 3-phosphate + UDP-N-acetyl-alpha-D-glucosamine = 1D-myo-inositol 2-acetamido-2-deoxy-alpha-D-glucopyranoside 3-phosphate + UDP + H(+). Its function is as follows. Catalyzes the transfer of a N-acetyl-glucosamine moiety to 1D-myo-inositol 3-phosphate to produce 1D-myo-inositol 2-acetamido-2-deoxy-glucopyranoside 3-phosphate in the mycothiol biosynthesis pathway. In Rhodococcus opacus (strain B4), this protein is D-inositol 3-phosphate glycosyltransferase.